The following is a 695-amino-acid chain: MSGAALGLEIVFVFFLALFLLHRYGDFKKQHRLVIIGTLLAWYLCFLIVFILPLDVSTTIYNRCKHAAANSSPPENSNITGLYATANPVPSQHPCFKPWSYIPDGIMPIFWRVVYWTSQFLTWILLPFMQSYARSGGFSITGKIKTALIENAIYYGTYLLIFGAFLIYVAVNPHLHLEWNQLQTIGIAAANTWGLFLLVLLLGYGLVEIPRSYWNGAKRGYLLMKTYFKAAKLMTEKADAEENLEDAMEEVRKVNESIKYNHPLRKCVDTILKKCPTEYQEKMGRNMDDYEDFDEKHSIYPSEKSLVKLHKQVIYSVQRHRRTQVQWQILLEQAFYLEDVAKNETSATHQFVHTFQSPEPENRFIQYFYNPTFEWYWECLLRPWFYKILAVVLSIFSVIVVWSECTFFSTTPVLSLFAVFIQLAEKTYNYIYIEIACFLSIFFLSICVYSTVFRIRVFNYYYLASHHQTDAYSLLFSGMLFCRLTPPLCLNFLGLTHMDSSISHKNTQPTAYTSIMGSMKVLSFIADGFYIYYPMLVVILCIATYFSLGTRCLNLLGFQQFMGDDDMTSDLVNEGKELIRKEKRKRQRQEEGENRRREWKERYGHNREDSTRNRNIHTDPKESNFSDVNTNRSAFKYTRANNRTERDRIELLQDAEPLDFNAETFTDDPLESESGRYQPGGRYLSMSRSDIFNDV.

Residues 1–5 are Extracellular-facing; the sequence is MSGAA. Residues 6-21 form a helical membrane-spanning segment; the sequence is LGLEIVFVFFLALFLL. Over 22–32 the chain is Cytoplasmic; it reads HRYGDFKKQHR. The chain crosses the membrane as a helical span at residues 33–53; it reads LVIIGTLLAWYLCFLIVFILP. Residues 54–105 are Extracellular-facing; the sequence is LDVSTTIYNRCKHAAANSSPPENSNITGLYATANPVPSQHPCFKPWSYIPDG. N78 is a glycosylation site (N-linked (GlcNAc...) asparagine). Residues 106–126 form a helical membrane-spanning segment; it reads IMPIFWRVVYWTSQFLTWILL. The Cytoplasmic portion of the chain corresponds to 127–150; sequence PFMQSYARSGGFSITGKIKTALIE. Residues 151–171 form a helical membrane-spanning segment; it reads NAIYYGTYLLIFGAFLIYVAV. Topologically, residues 172 to 186 are extracellular; the sequence is NPHLHLEWNQLQTIG. Residues 187–207 traverse the membrane as a helical segment; sequence IAAANTWGLFLLVLLLGYGLV. Over 208-387 the chain is Cytoplasmic; that stretch reads EIPRSYWNGA…ECLLRPWFYK (180 aa). Positions 227 to 262 form a coiled coil; the sequence is YFKAAKLMTEKADAEENLEDAMEEVRKVNESIKYNH. Residues 388-408 form a helical membrane-spanning segment; it reads ILAVVLSIFSVIVVWSECTFF. Over 409-432 the chain is Extracellular; it reads STTPVLSLFAVFIQLAEKTYNYIY. A helical membrane pass occupies residues 433–453; it reads IEIACFLSIFFLSICVYSTVF. Topologically, residues 454–473 are cytoplasmic; sequence RIRVFNYYYLASHHQTDAYS. A helical membrane pass occupies residues 474 to 494; it reads LLFSGMLFCRLTPPLCLNFLG. At 495-521 the chain is on the extracellular side; sequence LTHMDSSISHKNTQPTAYTSIMGSMKV. Residues 522–542 traverse the membrane as a helical segment; that stretch reads LSFIADGFYIYYPMLVVILCI. Over 543–695 the chain is Cytoplasmic; it reads ATYFSLGTRC…MSRSDIFNDV (153 aa). Positions 571–603 form a coiled coil; sequence LVNEGKELIRKEKRKRQRQEEGENRRREWKERY. The tract at residues 581 to 628 is disordered; sequence KEKRKRQRQEEGENRRREWKERYGHNREDSTRNRNIHTDPKESNFSDV. The span at 588-624 shows a compositional bias: basic and acidic residues; it reads RQEEGENRRREWKERYGHNREDSTRNRNIHTDPKESN. S633 carries the post-translational modification Phosphoserine. The segment at 662–682 is disordered; that stretch reads AETFTDDPLESESGRYQPGGR.

The protein belongs to the LIMR family.

It localises to the cell membrane. In terms of biological role, recruited to ligand-activated beta-2 adrenergic receptor/ADRB2, it negatively regulates the adrenergic receptor signaling pathway. May also regulate other G-protein coupled receptors including type-1 angiotensin II receptor/AGTR1. The sequence is that of G-protein coupled receptor-associated protein LMBRD2 from Homo sapiens (Human).